The sequence spans 1032 residues: Vacuolar membrane protease (1032 aa).

Over 1-11 the chain is Cytoplasmic; that stretch reads MKLGNPFVFRP. The chain crosses the membrane as a helical span at residues 12–32; the sequence is GPVSFWTTIVYLAIIIPLIYV. Residues 33–415 lie on the Vacuolar side of the membrane; it reads QETVPPAPSE…SAFALRGLFA (383 aa). 3 N-linked (GlcNAc...) asparagine glycosylation sites follow: Asn-50, Asn-138, and Asn-147. His-194 and Asp-206 together coordinate Zn(2+). The Proton acceptor role is filled by Glu-240. Residues Glu-241, Glu-266, and His-339 each contribute to the Zn(2+) site. A helical transmembrane segment spans residues 416 to 436; sequence WTLTLLITTPLVLFVVTYLLV. At 437-469 the chain is on the cytoplasmic side; it reads RDDKWYFFATKVDSTVGDGEETVSFGGWKGFVR. The chain crosses the membrane as a helical span at residues 470–490; it reads FPFALVVATALTIGSVFLLAK. At 491–493 the chain is on the vacuolar side; sequence VNP. A helical transmembrane segment spans residues 494–514; it reads LIIYSSGYSVWAMMISLFYFV. Residues 515 to 532 lie on the Cytoplasmic side of the membrane; that stretch reads SWLLLRGAHFVRPSALQR. A helical membrane pass occupies residues 533–553; that stretch reads GFTLIWLFIITWVLSVFAAVA. Residues 554–560 are Vacuolar-facing; sequence EDRMNMG. Residues 561 to 581 form a helical membrane-spanning segment; it reads AVYPLAFLHTFAFAAVLISLL. Residues 582 to 701 lie on the Cytoplasmic side of the membrane; that stretch reads EQYALPAKQD…WSGRLPTWTW (120 aa). Positions 595–688 are disordered; the sequence is QVSGENEEEE…RKRSFPPYEN (94 aa). The span at 599 to 608 shows a compositional bias: acidic residues; the sequence is ENEEEEEQEQ. Over residues 651 to 660 the composition is skewed to polar residues; sequence SSEQTTTFAN. A helical transmembrane segment spans residues 702-722; that stretch reads FIQLLLLVPLYVTVLGNLALV. The Vacuolar portion of the chain corresponds to 723–738; that stretch reads QTTSIGKTGTDGSSLL. Residues 739-759 traverse the membrane as a helical segment; sequence APLMGVGILAILLLLPLTPFI. At 760 to 766 the chain is on the cytoplasmic side; the sequence is HRVSHHV. The chain crosses the membrane as a helical span at residues 767-787; that stretch reads PLFLFLVFIGTLIYNLTAFPF. At 788-1032 the chain is on the vacuolar side; sequence SDNNRFKFYF…VEITKKIKVA (245 aa). An N-linked (GlcNAc...) asparagine glycan is attached at Asn-940.

It belongs to the peptidase M28 family. Zn(2+) is required as a cofactor.

It is found in the vacuole membrane. Its function is as follows. May be involved in vacuolar sorting and osmoregulation. The polypeptide is Vacuolar membrane protease (Metarhizium robertsii (strain ARSEF 23 / ATCC MYA-3075) (Metarhizium anisopliae (strain ARSEF 23))).